Consider the following 336-residue polypeptide: Octanoyltransferase (336 aa).

Polar residues predominate over residues 1 to 16; the sequence is MPKSALMSSSFQTSVS. Disordered regions lie at residues 1-22 and 48-88; these read MPKS…PLPV and QGKG…GGGR. The segment at 1-92 is unknown; the sequence is MPKSALMSSS…AAGGGRTIRD (92 aa). The lipB domain stretch occupies residues 93–336; that stretch reads VKEAAFDVLD…GQEALSVASP (244 aa). A BPL/LPL catalytic domain is found at 124–318; it reads VGGRPTLLLV…AFALTFADYD (195 aa). Substrate-binding positions include 170 to 177, 244 to 246, and 257 to 259; these read RGGDVTYH, SIG, and GIG. The Acyl-thioester intermediate role is filled by cysteine 275.

In the C-terminal section; belongs to the LipB family.

It is found in the cytoplasm. The catalysed reaction is octanoyl-[ACP] + L-lysyl-[protein] = N(6)-octanoyl-L-lysyl-[protein] + holo-[ACP] + H(+). It participates in protein modification; protein lipoylation via endogenous pathway; protein N(6)-(lipoyl)lysine from octanoyl-[acyl-carrier-protein]: step 1/2. Its function is as follows. Catalyzes the transfer of endogenously produced octanoic acid from octanoyl-acyl-carrier-protein onto the lipoyl domains of lipoate-dependent enzymes. Lipoyl-ACP can also act as a substrate although octanoyl-ACP is likely to be the physiological substrate. The polypeptide is Octanoyltransferase (Deinococcus radiodurans (strain ATCC 13939 / DSM 20539 / JCM 16871 / CCUG 27074 / LMG 4051 / NBRC 15346 / NCIMB 9279 / VKM B-1422 / R1)).